Here is a 110-residue protein sequence, read N- to C-terminus: Small ribosomal subunit protein bS16 (110 aa).

Residues 81–104 (VRPAEVLGKQKQEKERSAKKKDAA) are compositionally biased toward basic and acidic residues. Residues 81 to 110 (VRPAEVLGKQKQEKERSAKKKDAAASETSE) are disordered.

This sequence belongs to the bacterial ribosomal protein bS16 family.

The polypeptide is Small ribosomal subunit protein bS16 (Prochlorococcus marinus (strain NATL2A)).